We begin with the raw amino-acid sequence, 121 residues long: Large ribosomal subunit protein bL19 (121 aa).

It belongs to the bacterial ribosomal protein bL19 family.

This protein is located at the 30S-50S ribosomal subunit interface and may play a role in the structure and function of the aminoacyl-tRNA binding site. This is Large ribosomal subunit protein bL19 from Mesomycoplasma hyopneumoniae (strain 232) (Mycoplasma hyopneumoniae).